The following is a 204-amino-acid chain: uncharacterized protein (204 aa).

The stretch at 109–136 (QFDIDVHKDQIEKLKDLYKALLRIAETT) forms a coiled coil.

This is an uncharacterized protein from Bacillus subtilis (strain 168).